A 601-amino-acid polypeptide reads, in one-letter code: Glutamine--fructose-6-phosphate aminotransferase [isomerizing] (601 aa).

Cys-2 functions as the Nucleophile; for GATase activity in the catalytic mechanism. The Glutamine amidotransferase type-2 domain maps to 2 to 218; sequence CGIVGYIGYD…DHEIVIVKKD (217 aa). SIS domains follow at residues 284–423 and 453–591; these read IIND…EHGR and IATD…VDKP. Lys-596 (for Fru-6P isomerization activity) is an active-site residue.

In terms of assembly, homodimer.

Its subcellular location is the cytoplasm. The enzyme catalyses D-fructose 6-phosphate + L-glutamine = D-glucosamine 6-phosphate + L-glutamate. Functionally, catalyzes the first step in hexosamine metabolism, converting fructose-6P into glucosamine-6P using glutamine as a nitrogen source. The sequence is that of Glutamine--fructose-6-phosphate aminotransferase [isomerizing] from Staphylococcus aureus (strain Mu50 / ATCC 700699).